Here is a 142-residue protein sequence, read N- to C-terminus: Conidial pigment biosynthesis dehydratase EthD (142 aa).

In terms of domain architecture, EthD spans 25-121; sequence PGMSEAAYRE…PDHQKFADTS (97 aa).

Belongs to the tpcK family.

It functions in the pathway pigment biosynthesis. Its function is as follows. Dehydratase; part of the Pks1 gene cluster that mediates the biosynthesis of an anthraquinone derivative pigment that contributes to conidial pigmentation that provides protection from UV radiation, heat and cold stress. The polyketide synthase Pks1 produces 1-acetyl-2,4,6,8-tetrahydroxy-9,10-anthraquinone though condensation of acetyl-CoA with malonyl-CoA. The dehydratase EthD and the laccase Mlac1 further convert the anthraquinone derivative into the final conidial pigment. The polypeptide is Conidial pigment biosynthesis dehydratase EthD (Metarhizium robertsii (strain ARSEF 23 / ATCC MYA-3075) (Metarhizium anisopliae (strain ARSEF 23))).